The primary structure comprises 447 residues: UDP-glycosyltransferase 76E5 (447 aa).

Residues serine 272, 324–326 (APQ), 341–349 (HCGWNSTLE), and 363–366 (NGEQ) each bind UDP-alpha-D-glucose.

It belongs to the UDP-glycosyltransferase family.

This chain is UDP-glycosyltransferase 76E5 (UGT76E5), found in Arabidopsis thaliana (Mouse-ear cress).